The chain runs to 541 residues: Tyrosine-protein kinase Yes (541 aa).

Residues 1–20 (MGCIKSKEDKGPAMKYRTDN) are compositionally biased toward basic and acidic residues. The segment at 1–43 (MGCIKSKEDKGPAMKYRTDNTPEPISSHVSHYGSDSSQATQSP) is disordered. Gly2 is lipidated: N-myristoyl glycine. The S-palmitoyl cysteine; in membrane form moiety is linked to residue Cys3. Residues 26–37 (SSHVSHYGSDSS) show a composition bias toward low complexity. In terms of domain architecture, SH3 spans 89 to 150 (GGVTVFVALY…PSNYVAPADS (62 aa)). The SH2 domain occupies 156–253 (WYFGKMGRKD…GLCHKLTTVC (98 aa)). The 254-residue stretch at 275-528 (LRLEVKLGQG…YIQSFLEDYF (254 aa)) folds into the Protein kinase domain. Residues 281–289 (LGQGCFGEV) and Lys303 each bind ATP. Catalysis depends on Asp394, which acts as the Proton acceptor. The residue at position 424 (Tyr424) is a Phosphotyrosine; by autocatalysis. At Tyr535 the chain carries Phosphotyrosine; by CSK.

The protein belongs to the protein kinase superfamily. Tyr protein kinase family. SRC subfamily. Autophosphorylation at Tyr-424 maintains enzyme activity. In terms of processing, palmitoylation at Cys-3 promotes membrane localization.

The protein localises to the cell membrane. It localises to the cytoplasm. The protein resides in the cytoskeleton. Its subcellular location is the microtubule organizing center. It is found in the centrosome. The protein localises to the cytosol. It localises to the cell junction. It catalyses the reaction L-tyrosyl-[protein] + ATP = O-phospho-L-tyrosyl-[protein] + ADP + H(+). Functionally, non-receptor protein tyrosine kinase that is involved in the regulation of cell growth and survival, apoptosis, cell-cell adhesion, cytoskeleton remodeling, differentiation, G2/M progression and cytokinesis. This Gallus gallus (Chicken) protein is Tyrosine-protein kinase Yes (YES1).